Here is a 138-residue protein sequence, read N- to C-terminus: Small ribosomal subunit protein uS11c (138 aa).

The interval 1–22 (MAKSIPRISSRRNGPIGSGKTV) is disordered.

The protein belongs to the universal ribosomal protein uS11 family. As to quaternary structure, part of the 30S ribosomal subunit.

It localises to the plastid. The sequence is that of Small ribosomal subunit protein uS11c from Cuscuta exaltata (Tall dodder).